The sequence spans 529 residues: ATP synthase subunit alpha (529 aa).

173 to 180 is a binding site for ATP; the sequence is GDRQTGKT.

The protein belongs to the ATPase alpha/beta chains family. As to quaternary structure, F-type ATPases have 2 components, CF(1) - the catalytic core - and CF(0) - the membrane proton channel. CF(1) has five subunits: alpha(3), beta(3), gamma(1), delta(1), epsilon(1). CF(0) has three main subunits: a(1), b(2) and c(9-12). The alpha and beta chains form an alternating ring which encloses part of the gamma chain. CF(1) is attached to CF(0) by a central stalk formed by the gamma and epsilon chains, while a peripheral stalk is formed by the delta and b chains.

The protein localises to the cell membrane. The enzyme catalyses ATP + H2O + 4 H(+)(in) = ADP + phosphate + 5 H(+)(out). Its function is as follows. Produces ATP from ADP in the presence of a proton gradient across the membrane. The alpha chain is a regulatory subunit. The protein is ATP synthase subunit alpha of Streptomyces lividans.